The sequence spans 284 residues: Tropomyosin alpha-1 chain (284 aa).

Met1 carries the post-translational modification N-acetylmethionine. Positions 1–38 (MDAIKKKMQMLKLDKENALDRAEQAEADKKAAEDRSKQ) are disordered. A coiled-coil region spans residues 1-284 (MDAIKKKMQM…DHALNDMTSI (284 aa)). The span at 12 to 38 (KLDKENALDRAEQAEADKKAAEDRSKQ) shows a compositional bias: basic and acidic residues. The residue at position 45 (Ser45) is a Phosphoserine. Positions 116-136 (AEKAADESERGMKVIESRAQK) are disordered. 4 positions are modified to phosphoserine: Ser174, Ser186, Ser206, and Ser252. Tyr261 is modified (phosphotyrosine). Ser271 and Ser283 each carry phosphoserine.

The protein belongs to the tropomyosin family. As to quaternary structure, homodimer. Heterodimer of an alpha (TPM1, TPM3 or TPM4) and a beta (TPM2) chain. Interacts with HRG (via the HRR domain); the interaction contributes to the antiangiogenic properties of the histidine/proline-rich region (HRR) of HRG. Interacts (via N-terminus) with LMOD2 (via N-terminus) and TMOD1 (via N-terminus). In terms of processing, phosphorylated at Ser-283 by DAPK1 in response to oxidative stress and this phosphorylation enhances stress fiber formation in endothelial cells.

It localises to the cytoplasm. It is found in the cytoskeleton. In terms of biological role, binds to actin filaments in muscle and non-muscle cells. Plays a central role, in association with the troponin complex, in the calcium dependent regulation of vertebrate striated muscle contraction. Smooth muscle contraction is regulated by interaction with caldesmon. In non-muscle cells is implicated in stabilizing cytoskeleton actin filaments. The polypeptide is Tropomyosin alpha-1 chain (Tpm1) (Mus musculus (Mouse)).